The sequence spans 938 residues: LPS-assembly protein LptD (938 aa).

An N-terminal signal peptide occupies residues 1-33 (MAVKHPAFRKKFPLLVTGSLLALQPAFSLQSFA). The tract at residues 52–96 (KTATSALPPRPQHSRSAVSTTSGSATATATKQEPAPVLVTESKGR) is disordered. Low complexity predominate over residues 65 to 81 (SRSAVSTTSGSATATAT).

This sequence belongs to the LptD family. In terms of assembly, component of the lipopolysaccharide transport and assembly complex. Interacts with LptE and LptA.

The protein localises to the cell outer membrane. Functionally, together with LptE, is involved in the assembly of lipopolysaccharide (LPS) at the surface of the outer membrane. This is LPS-assembly protein LptD from Ectopseudomonas mendocina (strain ymp) (Pseudomonas mendocina).